The chain runs to 452 residues: Bifunctional protein GlmU (452 aa).

The interval 1–225 (MEVVILAAGQ…VSETLGVNSK (225 aa)) is pyrophosphorylase. UDP-N-acetyl-alpha-D-glucosamine-binding positions include 6 to 9 (LAAG), Lys20, Gln71, 76 to 77 (GT), 98 to 100 (YGD), Gly135, Glu150, Asn165, and Asn223. Asp100 is a Mg(2+) binding site. Asn223 provides a ligand contact to Mg(2+). The interval 226 to 246 (PQLAELERIHQRNIAQRLMED) is linker. The segment at 247–452 (GVTLIDPARI…AGWKRPVKQR (206 aa)) is N-acetyltransferase. Residues Arg329 and Lys347 each coordinate UDP-N-acetyl-alpha-D-glucosamine. Residue His359 is the Proton acceptor of the active site. UDP-N-acetyl-alpha-D-glucosamine is bound by residues Tyr362 and Asn373. Acetyl-CoA contacts are provided by residues Ala376, 382–383 (NY), Ser401, Ala419, and Arg436.

It in the N-terminal section; belongs to the N-acetylglucosamine-1-phosphate uridyltransferase family. This sequence in the C-terminal section; belongs to the transferase hexapeptide repeat family. In terms of assembly, homotrimer. Mg(2+) serves as cofactor.

The protein localises to the cytoplasm. It carries out the reaction alpha-D-glucosamine 1-phosphate + acetyl-CoA = N-acetyl-alpha-D-glucosamine 1-phosphate + CoA + H(+). The catalysed reaction is N-acetyl-alpha-D-glucosamine 1-phosphate + UTP + H(+) = UDP-N-acetyl-alpha-D-glucosamine + diphosphate. It participates in nucleotide-sugar biosynthesis; UDP-N-acetyl-alpha-D-glucosamine biosynthesis; N-acetyl-alpha-D-glucosamine 1-phosphate from alpha-D-glucosamine 6-phosphate (route II): step 2/2. Its pathway is nucleotide-sugar biosynthesis; UDP-N-acetyl-alpha-D-glucosamine biosynthesis; UDP-N-acetyl-alpha-D-glucosamine from N-acetyl-alpha-D-glucosamine 1-phosphate: step 1/1. The protein operates within bacterial outer membrane biogenesis; LPS lipid A biosynthesis. Catalyzes the last two sequential reactions in the de novo biosynthetic pathway for UDP-N-acetylglucosamine (UDP-GlcNAc). The C-terminal domain catalyzes the transfer of acetyl group from acetyl coenzyme A to glucosamine-1-phosphate (GlcN-1-P) to produce N-acetylglucosamine-1-phosphate (GlcNAc-1-P), which is converted into UDP-GlcNAc by the transfer of uridine 5-monophosphate (from uridine 5-triphosphate), a reaction catalyzed by the N-terminal domain. This Azoarcus sp. (strain BH72) protein is Bifunctional protein GlmU.